The following is a 458-amino-acid chain: GTPase Obg (458 aa).

One can recognise an Obg domain in the interval 1–157; that stretch reads MSFLDRVKIY…ITLYLELKVL (157 aa). The OBG-type G domain maps to 158–326; sequence ADLGLVGFPN…VLNEIVKVIS (169 aa). GTP is bound by residues 164-171, 189-193, 210-213, 280-283, and 307-309; these read GFPNAGKS, FTTLN, DIPG, NKAD, and SAA. Mg(2+) contacts are provided by S171 and T191. An OCT domain is found at 341 to 419; sequence AVHGVEPLFK…VGQKEFEWSG (79 aa). Residues 420 to 458 are disordered; sequence TELDSERAEQPDFEGYKRRTTQAERLEKRRQRRLKKEEK. The segment covering 423–446 has biased composition (basic and acidic residues); it reads DSERAEQPDFEGYKRRTTQAERLE. The segment covering 447-458 has biased composition (basic residues); sequence KRRQRRLKKEEK.

This sequence belongs to the TRAFAC class OBG-HflX-like GTPase superfamily. OBG GTPase family. In terms of assembly, monomer. Requires Mg(2+) as cofactor.

It localises to the cytoplasm. An essential GTPase which binds GTP, GDP and possibly (p)ppGpp with moderate affinity, with high nucleotide exchange rates and a fairly low GTP hydrolysis rate. Plays a role in control of the cell cycle, stress response, ribosome biogenesis and in those bacteria that undergo differentiation, in morphogenesis control. The chain is GTPase Obg from Elusimicrobium minutum (strain Pei191).